Here is a 164-residue protein sequence, read N- to C-terminus: Putative pre-16S rRNA nuclease (164 aa).

The protein belongs to the YqgF nuclease family.

Its subcellular location is the cytoplasm. In terms of biological role, could be a nuclease involved in processing of the 5'-end of pre-16S rRNA. This is Putative pre-16S rRNA nuclease from Synechococcus sp. (strain CC9902).